The sequence spans 301 residues: Probable alpha-L-glutamate ligase 1 (301 aa).

The ATP-grasp domain occupies 104–287; it reads LQLLSRKGIG…VTEPIVEYIE (184 aa). ATP contacts are provided by residues lysine 141, 178 to 179, aspartate 187, and 211 to 213; these read EY and RSN. 3 residues coordinate Mg(2+): aspartate 248, glutamate 260, and asparagine 262. The Mn(2+) site is built by aspartate 248, glutamate 260, and asparagine 262.

The protein belongs to the RimK family. Mg(2+) is required as a cofactor. Mn(2+) serves as cofactor.

This chain is Probable alpha-L-glutamate ligase 1, found in Shewanella baltica (strain OS155 / ATCC BAA-1091).